The sequence spans 522 residues: Glucose-6-phosphate 1-dehydrogenase (522 aa).

NADP(+) contacts are provided by residues 40 to 47 (GASGDLAK), R74, and K177. D-glucose 6-phosphate contacts are provided by residues K177, 207 to 211 (HYLGK), E245, and D264. H269 acts as the Proton acceptor in catalysis. NADP(+) is bound at residue R364. D-glucose 6-phosphate is bound by residues K367 and K372. Positions 373, 377, and 401 each coordinate NADP(+). A D-glucose 6-phosphate-binding site is contributed by Q403. Residues 409–411 (YMK), 429–431 (DLT), R495, and W517 each bind NADP(+).

The protein belongs to the glucose-6-phosphate dehydrogenase family.

The protein resides in the cytoplasm. Its subcellular location is the cytosol. It carries out the reaction D-glucose 6-phosphate + NADP(+) = 6-phospho-D-glucono-1,5-lactone + NADPH + H(+). It functions in the pathway carbohydrate degradation; pentose phosphate pathway; D-ribulose 5-phosphate from D-glucose 6-phosphate (oxidative stage): step 1/3. Cytosolic glucose-6-phosphate dehydrogenase that catalyzes the first and rate-limiting step of the oxidative branch within the pentose phosphate pathway/shunt, an alternative route to glycolysis for the dissimilation of carbohydrates and a major source of reducing power and metabolic intermediates for fatty acid and nucleic acid biosynthetic processes. The sequence is that of Glucose-6-phosphate 1-dehydrogenase (gspd-1) from Caenorhabditis elegans.